We begin with the raw amino-acid sequence, 211 residues long: FMN-dependent NADH:quinone oxidoreductase 2 (211 aa).

Residue 102–105 (MWNF) coordinates FMN.

It belongs to the azoreductase type 1 family. As to quaternary structure, homodimer. It depends on FMN as a cofactor.

The enzyme catalyses 2 a quinone + NADH + H(+) = 2 a 1,4-benzosemiquinone + NAD(+). It carries out the reaction N,N-dimethyl-1,4-phenylenediamine + anthranilate + 2 NAD(+) = 2-(4-dimethylaminophenyl)diazenylbenzoate + 2 NADH + 2 H(+). In terms of biological role, quinone reductase that provides resistance to thiol-specific stress caused by electrophilic quinones. Its function is as follows. Also exhibits azoreductase activity. Catalyzes the reductive cleavage of the azo bond in aromatic azo compounds to the corresponding amines. This chain is FMN-dependent NADH:quinone oxidoreductase 2, found in Bacillus cereus (strain ATCC 14579 / DSM 31 / CCUG 7414 / JCM 2152 / NBRC 15305 / NCIMB 9373 / NCTC 2599 / NRRL B-3711).